Reading from the N-terminus, the 192-residue chain is Fe/S biogenesis protein NfuA (192 aa).

Residues cysteine 149 and cysteine 152 each contribute to the [4Fe-4S] cluster site.

Belongs to the NfuA family. In terms of assembly, homodimer. [4Fe-4S] cluster is required as a cofactor.

Its function is as follows. Involved in iron-sulfur cluster biogenesis. Binds a 4Fe-4S cluster, can transfer this cluster to apoproteins, and thereby intervenes in the maturation of Fe/S proteins. Could also act as a scaffold/chaperone for damaged Fe/S proteins. The sequence is that of Fe/S biogenesis protein NfuA from Shewanella sp. (strain MR-7).